A 280-amino-acid chain; its full sequence is Probable endonuclease 4 (280 aa).

Residues histidine 68, histidine 108, glutamate 143, aspartate 177, histidine 180, histidine 214, aspartate 227, histidine 229, and glutamate 259 each contribute to the Zn(2+) site.

It belongs to the AP endonuclease 2 family. Zn(2+) is required as a cofactor.

It carries out the reaction Endonucleolytic cleavage to 5'-phosphooligonucleotide end-products.. Endonuclease IV plays a role in DNA repair. It cleaves phosphodiester bonds at apurinic or apyrimidinic (AP) sites, generating a 3'-hydroxyl group and a 5'-terminal sugar phosphate. This Cenarchaeum symbiosum (strain A) protein is Probable endonuclease 4.